The following is a 122-amino-acid chain: ATP-dependent Clp protease adapter protein ClpS (122 aa).

A disordered region spans residues 1–33 (MHAPSQIRLTFNQDHPEPHEHEDEGAGLAVQES). Residues 14-24 (DHPEPHEHEDE) are compositionally biased toward basic and acidic residues.

Belongs to the ClpS family. As to quaternary structure, binds to the N-terminal domain of the chaperone ClpA.

In terms of biological role, involved in the modulation of the specificity of the ClpAP-mediated ATP-dependent protein degradation. The protein is ATP-dependent Clp protease adapter protein ClpS of Pseudomonas aeruginosa (strain ATCC 15692 / DSM 22644 / CIP 104116 / JCM 14847 / LMG 12228 / 1C / PRS 101 / PAO1).